We begin with the raw amino-acid sequence, 92 residues long: TVSCGQVDTALTPCLTYLTKGGTPSTQCCSGVRSLKSMTGTKVPDRQAACNCLKQAAARYQGIKDAAAALSQKCGVQLSVPISRSTDCSKIS.

Disulfide bonds link cysteine 4–cysteine 52, cysteine 14–cysteine 28, cysteine 29–cysteine 74, and cysteine 50–cysteine 88.

Belongs to the plant LTP family. As to expression, expressed in seeds and, at very low levels, in pulp of fruit (at protein level).

Its function is as follows. Plant non-specific lipid-transfer proteins transfer phospholipids as well as galactolipids across membranes. May play a role in wax or cutin deposition in the cell walls of expanding epidermal cells and certain secretory tissues. The sequence is that of Non-specific lipid-transfer protein 2 from Actinidia deliciosa (Kiwi).